The primary structure comprises 219 residues: uncharacterized protein (219 aa).

Over residues 139–154 (PRKIKQKKKTKKKRPS) the composition is skewed to basic residues. Positions 139–160 (PRKIKQKKKTKKKRPSKSAPKT) are disordered. Positions 159–217 (KTYTVKKGDTLWDLAGKFYGDSTKWRKIWKVNKKAMIKRSKRNIRQPGHWIFPGQKLKI) constitute a LysM domain.

This is an uncharacterized protein from Bacillus subtilis (strain 168).